We begin with the raw amino-acid sequence, 176 residues long: NAD(P)H-quinone oxidoreductase subunit 6, chloroplastic (176 aa).

5 helical membrane-spanning segments follow: residues 10 to 30 (ILML…VLLT), 33 to 53 (IYSA…YFLL), 60 to 80 (VAQL…AVMF), 95 to 115 (IGDG…MTTI), and 152 to 172 (FYLP…GAIT).

This sequence belongs to the complex I subunit 6 family. NDH is composed of at least 16 different subunits, 5 of which are encoded in the nucleus.

The protein resides in the plastid. The protein localises to the chloroplast thylakoid membrane. It catalyses the reaction a plastoquinone + NADH + (n+1) H(+)(in) = a plastoquinol + NAD(+) + n H(+)(out). It carries out the reaction a plastoquinone + NADPH + (n+1) H(+)(in) = a plastoquinol + NADP(+) + n H(+)(out). In terms of biological role, NDH shuttles electrons from NAD(P)H:plastoquinone, via FMN and iron-sulfur (Fe-S) centers, to quinones in the photosynthetic chain and possibly in a chloroplast respiratory chain. The immediate electron acceptor for the enzyme in this species is believed to be plastoquinone. Couples the redox reaction to proton translocation, and thus conserves the redox energy in a proton gradient. The sequence is that of NAD(P)H-quinone oxidoreductase subunit 6, chloroplastic (ndhG) from Triticum aestivum (Wheat).